A 53-amino-acid polypeptide reads, in one-letter code: Large ribosomal subunit protein bL33A (53 aa).

The protein belongs to the bacterial ribosomal protein bL33 family.

This is Large ribosomal subunit protein bL33A from Mycoplasmoides gallisepticum (strain R(low / passage 15 / clone 2)) (Mycoplasma gallisepticum).